Consider the following 845-residue polypeptide: Beta-mannosidase B (845 aa).

The segment at M1–D20 is disordered. A glycan (N-linked (GlcNAc...) asparagine) is linked at N252. E432 (proton donor) is an active-site residue. N717 and N723 each carry an N-linked (GlcNAc...) asparagine glycan.

The protein belongs to the glycosyl hydrolase 2 family. Beta-mannosidase B subfamily.

The catalysed reaction is Hydrolysis of terminal, non-reducing beta-D-mannose residues in beta-D-mannosides.. It functions in the pathway glycan metabolism; N-glycan degradation. Exoglycosidase that cleaves the single beta-linked mannose residue from the non-reducing end of beta-mannosidic oligosaccharides of various complexity and length. Prefers mannobiose over mannotriose and has no activity against polymeric mannan. Is also severely restricted by galactosyl substitutions at the +1 subsite. The chain is Beta-mannosidase B (mndB) from Neosartorya fischeri (strain ATCC 1020 / DSM 3700 / CBS 544.65 / FGSC A1164 / JCM 1740 / NRRL 181 / WB 181) (Aspergillus fischerianus).